Here is a 617-residue protein sequence, read N- to C-terminus: RNA polymerase sigma factor RpoD (617 aa).

Residues 192–222 (NITNDSNENEDENEDENEDEDENSIDPELAN) are disordered. A compositionally biased stretch (acidic residues) spans 198-216 (NENEDENEDENEDEDENSI). The interval 383 to 453 (MVEANLRLVI…TRSIADQART (71 aa)) is sigma-70 factor domain-2. The short motif at 407 to 410 (DLIQ) is the Interaction with polymerase core subunit RpoC element. The tract at residues 462 to 538 (ETINKLNRIS…DTTLELPLDS (77 aa)) is sigma-70 factor domain-3. The tract at residues 551–604 (VLSGLTAREAKVLRMRFGIDMNTDHTLEEVGKQFDVTRERIRQIEAKALRKLRH) is sigma-70 factor domain-4. The H-T-H motif DNA-binding region spans 577-596 (LEEVGKQFDVTRERIRQIEA).

Belongs to the sigma-70 factor family. RpoD/SigA subfamily. As to quaternary structure, interacts transiently with the RNA polymerase catalytic core.

Its subcellular location is the cytoplasm. Sigma factors are initiation factors that promote the attachment of RNA polymerase to specific initiation sites and are then released. This sigma factor is the primary sigma factor during exponential growth. The sequence is that of RNA polymerase sigma factor RpoD from Buchnera aphidicola subsp. Schizaphis graminum (strain Sg).